Reading from the N-terminus, the 153-residue chain is Alkyl hydroperoxide reductase E (153 aa).

Residues 2-153 (LNVGATAPDF…WTDALAALTA (152 aa)) form the Thioredoxin domain. Cys45 is an active-site residue.

Belongs to the peroxiredoxin family. AhpE subfamily. As to quaternary structure, homodimer. Forms both dimers and octamers; a tightly-associated dimer and a ring-like octamer.

The enzyme catalyses [mycoredoxin]-L-dithiol + a hydroperoxide = [mycoredoxin]-L-disulfide + an alcohol + H2O. Its function is as follows. Thiol-specific peroxidase that catalyzes the reduction of hydrogen peroxide and organic hydroperoxides to water and alcohols, respectively. Plays a role in cell protection against oxidative stress by detoxifying peroxides. May represent an important antioxidant defense against cytotoxic peroxides, especially peroxynitrite, which can be formed by activated macrophages during infection. This is Alkyl hydroperoxide reductase E (ahpE) from Mycobacterium bovis (strain ATCC BAA-935 / AF2122/97).